The sequence spans 547 residues: Glucose-6-phosphate isomerase (547 aa).

Catalysis depends on Glu352, which acts as the Proton donor. Residues His383 and Lys511 contribute to the active site.

This sequence belongs to the GPI family.

It localises to the cytoplasm. It catalyses the reaction alpha-D-glucose 6-phosphate = beta-D-fructose 6-phosphate. The protein operates within carbohydrate biosynthesis; gluconeogenesis. It functions in the pathway carbohydrate degradation; glycolysis; D-glyceraldehyde 3-phosphate and glycerone phosphate from D-glucose: step 2/4. Catalyzes the reversible isomerization of glucose-6-phosphate to fructose-6-phosphate. The sequence is that of Glucose-6-phosphate isomerase from Magnetococcus marinus (strain ATCC BAA-1437 / JCM 17883 / MC-1).